The chain runs to 96 residues: Small ribosomal subunit protein bS6 (96 aa).

This sequence belongs to the bacterial ribosomal protein bS6 family.

Its function is as follows. Binds together with bS18 to 16S ribosomal RNA. The protein is Small ribosomal subunit protein bS6 of Mycolicibacterium paratuberculosis (strain ATCC BAA-968 / K-10) (Mycobacterium paratuberculosis).